The chain runs to 748 residues: Catalase-peroxidase 2 (748 aa).

The span at Met1–Glu24 shows a compositional bias: polar residues. The segment at Met1–Asp43 is disordered. Residues Trp113 to Tyr238 constitute a cross-link (tryptophyl-tyrosyl-methioninium (Trp-Tyr) (with M-264)). The active-site Proton acceptor is His114. The segment at residues Tyr238–Met264 is a cross-link (tryptophyl-tyrosyl-methioninium (Tyr-Met) (with W-113)). Heme b is bound at residue His279.

This sequence belongs to the peroxidase family. Peroxidase/catalase subfamily. As to quaternary structure, homotetramer. Heme b is required as a cofactor. In terms of processing, formation of the three residue Trp-Tyr-Met cross-link is important for the catalase, but not the peroxidase activity of the enzyme.

The enzyme catalyses H2O2 + AH2 = A + 2 H2O. It carries out the reaction 2 H2O2 = O2 + 2 H2O. Functionally, bifunctional enzyme with both catalase and broad-spectrum peroxidase activity. May play a role in the intracellular survival of mycobacteria. The sequence is that of Catalase-peroxidase 2 from Mycolicibacterium smegmatis (strain ATCC 700084 / mc(2)155) (Mycobacterium smegmatis).